The primary structure comprises 156 residues: MPRGGSPTPRTIPADPIYGSTLVAKLINKIMIGGKKSKAEKIVYEALRIASEQLNEDPIAVLTKAIENTKPLVETRSRRIGGAVYQIPVEVPERRALALALRWIVNGARDRGAGEMEKKLAAELVDAYKGQGYAAKRREEIHRMAEANKAFAHLRW.

The protein belongs to the universal ribosomal protein uS7 family. Part of the 30S ribosomal subunit. Contacts proteins S9 and S11.

One of the primary rRNA binding proteins, it binds directly to 16S rRNA where it nucleates assembly of the head domain of the 30S subunit. Is located at the subunit interface close to the decoding center, probably blocks exit of the E-site tRNA. In Coprothermobacter proteolyticus (strain ATCC 35245 / DSM 5265 / OCM 4 / BT), this protein is Small ribosomal subunit protein uS7.